Reading from the N-terminus, the 210-residue chain is Cytochrome c biogenesis ATP-binding export protein CcmA (210 aa).

Positions 3-205 constitute an ABC transporter domain; it reads LHLQAAGLAC…KPSGYRELNL (203 aa). 37 to 44 is a binding site for ATP; the sequence is GPNGSGKT.

The protein belongs to the ABC transporter superfamily. CcmA exporter (TC 3.A.1.107) family. As to quaternary structure, the complex is composed of two ATP-binding proteins (CcmA) and two transmembrane proteins (CcmB).

The protein localises to the cell inner membrane. It carries out the reaction heme b(in) + ATP + H2O = heme b(out) + ADP + phosphate + H(+). Part of the ABC transporter complex CcmAB involved in the biogenesis of c-type cytochromes; once thought to export heme, this seems not to be the case, but its exact role is uncertain. Responsible for energy coupling to the transport system. The protein is Cytochrome c biogenesis ATP-binding export protein CcmA of Pseudomonas putida (strain GB-1).